Consider the following 92-residue polypeptide: Alpha-hemoglobin-stabilizing protein (92 aa).

The protein belongs to the AHSP family. In terms of assembly, monomer. Forms a heterodimer with free alpha-hemoglobin. Does not bind beta-hemoglobin nor alpha(2)beta(2) hemoglobin A.

It is found in the cytoplasm. Its function is as follows. Acts as a chaperone to prevent the harmful aggregation of alpha-hemoglobin during normal erythroid cell development. Specifically protects free alpha-hemoglobin from precipitation. This is Alpha-hemoglobin-stabilizing protein (AHSP) from Bos taurus (Bovine).